The sequence spans 550 residues: Dihydroxy-acid dehydratase (550 aa).

Mg(2+) is bound at residue aspartate 78. A [2Fe-2S] cluster-binding site is contributed by cysteine 119. Mg(2+) contacts are provided by aspartate 120 and lysine 121. The residue at position 121 (lysine 121) is an N6-carboxylysine. Cysteine 191 provides a ligand contact to [2Fe-2S] cluster. Glutamate 440 contacts Mg(2+). Serine 466 (proton acceptor) is an active-site residue.

It belongs to the IlvD/Edd family. In terms of assembly, homodimer. [2Fe-2S] cluster serves as cofactor. Requires Mg(2+) as cofactor.

The enzyme catalyses (2R)-2,3-dihydroxy-3-methylbutanoate = 3-methyl-2-oxobutanoate + H2O. It catalyses the reaction (2R,3R)-2,3-dihydroxy-3-methylpentanoate = (S)-3-methyl-2-oxopentanoate + H2O. Its pathway is amino-acid biosynthesis; L-isoleucine biosynthesis; L-isoleucine from 2-oxobutanoate: step 3/4. The protein operates within amino-acid biosynthesis; L-valine biosynthesis; L-valine from pyruvate: step 3/4. Functionally, functions in the biosynthesis of branched-chain amino acids. Catalyzes the dehydration of (2R,3R)-2,3-dihydroxy-3-methylpentanoate (2,3-dihydroxy-3-methylvalerate) into 2-oxo-3-methylpentanoate (2-oxo-3-methylvalerate) and of (2R)-2,3-dihydroxy-3-methylbutanoate (2,3-dihydroxyisovalerate) into 2-oxo-3-methylbutanoate (2-oxoisovalerate), the penultimate precursor to L-isoleucine and L-valine, respectively. This chain is Dihydroxy-acid dehydratase, found in Methanococcus maripaludis (strain C5 / ATCC BAA-1333).